Consider the following 260-residue polypeptide: Indole-3-glycerol phosphate synthase (260 aa).

This sequence belongs to the TrpC family.

It carries out the reaction 1-(2-carboxyphenylamino)-1-deoxy-D-ribulose 5-phosphate + H(+) = (1S,2R)-1-C-(indol-3-yl)glycerol 3-phosphate + CO2 + H2O. It participates in amino-acid biosynthesis; L-tryptophan biosynthesis; L-tryptophan from chorismate: step 4/5. The polypeptide is Indole-3-glycerol phosphate synthase (Neisseria gonorrhoeae (strain NCCP11945)).